Consider the following 104-residue polypeptide: Phosphoribosyl-ATP pyrophosphatase (104 aa).

Belongs to the PRA-PH family.

It is found in the cytoplasm. It catalyses the reaction 1-(5-phospho-beta-D-ribosyl)-ATP + H2O = 1-(5-phospho-beta-D-ribosyl)-5'-AMP + diphosphate + H(+). It functions in the pathway amino-acid biosynthesis; L-histidine biosynthesis; L-histidine from 5-phospho-alpha-D-ribose 1-diphosphate: step 2/9. This is Phosphoribosyl-ATP pyrophosphatase from Allorhizobium ampelinum (strain ATCC BAA-846 / DSM 112012 / S4) (Agrobacterium vitis (strain S4)).